The following is a 290-amino-acid chain: uncharacterized protein (290 aa).

In terms of domain architecture, AB hydrolase-1 spans 30–274 (PTILLLHGFP…YDTGHFALET (245 aa)). His269 is an active-site residue.

It belongs to the DmpD/TodF/XylF esterase family.

This is an uncharacterized protein from Saccharomyces cerevisiae (strain ATCC 204508 / S288c) (Baker's yeast).